The sequence spans 674 residues: Polyunsaturated fatty acid 5-lipoxygenase (674 aa).

The region spanning 2–118 is the PLAT domain; sequence PSYTVTVATG…EVVLRDGRAK (117 aa). Gly-17, Thr-18, Asp-19, Asn-44, Asp-45, Glu-47, Asp-79, and Asp-80 together coordinate Ca(2+). In terms of domain architecture, Lipoxygenase spans 119–674; the sequence is LARDDQIHIL…PDRIPNSVAI (556 aa). Ser-272 carries the post-translational modification Phosphoserine; by MAPKAPK2. Fe cation contacts are provided by His-368 and His-373. Ser-524 carries the phosphoserine; by PKA modification. Residues His-551, Asn-555, and Ile-674 each coordinate Fe cation.

It belongs to the lipoxygenase family. Homodimer. Interacts with ALOX5AP and LTC4S. Interacts with COTL1, the interaction is required for stability and efficient catalytic activity. Interacts with PIK3R1; this interaction bridges ALOX5 with CD40 after CD40 ligation in B cells and leads to the production of reactive oxygen species (ROS). Interacts (via PLAT domain) with DICER1 (via Dicer dsRNA-binding fold domain); this interaction enhances arachidonate 5-lipoxygenase activity and modifies the miRNA precursor processing activity of DICER1. Fe cation is required as a cofactor. Post-translationally, serine phosphorylation by MAPKAPK2 is stimulated by arachidonic acid. Phosphorylation on Ser-524 by PKA has an inhibitory effect. Phosphorylation on Ser-272 prevents export from the nucleus. Phosphorylation at Ser-524 is stimulated by 8-bromo-3',5'-cyclic AMP or prostaglandin E2.

It is found in the cytoplasm. Its subcellular location is the nucleus matrix. The protein localises to the nucleus membrane. The protein resides in the perinuclear region. It localises to the cytosol. It is found in the nucleus envelope. Its subcellular location is the nucleus intermembrane space. It carries out the reaction (5Z,8Z,11Z,14Z)-eicosatetraenoate + O2 = leukotriene A4 + H2O. It catalyses the reaction 18-HEPE + O2 = (5S)-hydroperoxy-18-hydroxy-(7E,9E,11Z,14Z,16E)-eicosapentaenoate. The catalysed reaction is (18R)-hydroxy-(5Z,8Z,11Z,14Z,16E)-eicosapentaenoate + O2 = (5S)-hydroperoxy-(18R)-hydroxy-(6E,8Z,11Z,14Z,16E)-eicosapentaenoate. The enzyme catalyses (18S)-hydroxy-(5Z,8Z,11Z,14Z,16E)-eicosapentaenoate + O2 = (5S)-hydroperoxy-(18S)-hydroxy-(6E,8Z,11Z,14Z,16E)-eicosapentaenoate. It carries out the reaction (5S)-hydroperoxy-(18S)-hydroxy-(6E,8Z,11Z,14Z,16E)-eicosapentaenoate = (5S,6S)-epoxy-(18S)-hydroxy-(7E,9E,11Z,14Z,16E)-eicosapentaenoate + H2O. It catalyses the reaction (5S)-hydroperoxy-(18R)-hydroxy-(6E,8Z,11Z,14Z,16E)-eicosapentaenoate = (5S,6S)-epoxy-(18R)-hydroxy-(7E,9E,11Z,14Z,16E)-eicosapentaenoate + H2O. The catalysed reaction is (5S)-hydroperoxy-18-hydroxy-(7E,9E,11Z,14Z,16E)-eicosapentaenoate = (5S,6S)-epoxy-18-hydroxy-(7E,9E,11Z,14Z,16E)-eicosapentaenoate + H2O. The enzyme catalyses (5Z,8Z,11Z,14Z)-eicosatetraenoate + O2 = (5S)-hydroperoxy-(6E,8Z,11Z,14Z)-eicosatetraenoate. It carries out the reaction (15S)-hydroxy-(5Z,8Z,11Z,13E)-eicosatetraenoate + O2 = (5S)-hydroperoxy-(15S)-hydroxy-(6E,8Z,11Z,13E)-eicosatetraenoate. It catalyses the reaction (5S)-hydroperoxy-(6E,8Z,11Z,14Z)-eicosatetraenoate = leukotriene A4 + H2O. The catalysed reaction is (5Z,8Z,11Z,14Z)-eicosatetraenoate + O2 = (8S)-hydroperoxy-(5Z,9E,11Z,14Z)-eicosatetraenoate. The enzyme catalyses (5Z,8Z,11Z,14Z)-eicosatetraenoate + O2 = (12S)-hydroperoxy-(5Z,8Z,10E,14Z)-eicosatetraenoate. It carries out the reaction (5Z,8Z)-eicosadienoate + O2 = (5S)-hydroperoxy-(6E,8Z)-eicosadienoate. It catalyses the reaction (12S)-hydroxy-(5Z,8Z,10E,14Z)-eicosatetraenoate + O2 = (5S)-hydroperoxy-(12S)-hydroxy-(6E,8Z,10E,14Z)-eicosatetraenoate. The catalysed reaction is (5Z,8Z,11Z,14Z,17Z)-eicosapentaenoate + O2 = 5-hydroperoxy-(6E,8Z,11Z,14Z,17Z)-eicosapentaenoate. The enzyme catalyses (4Z,7Z,10Z,13Z,16Z,19Z)-docosahexaenoate + O2 = (14S)-hydroperoxy-(4Z,7Z,10Z,12E,16Z,19Z)-docosahexaenoate. It carries out the reaction (4Z,7Z,10Z,13Z,16Z,19Z)-docosahexaenoate + O2 = (7S)-hydroperoxy-(4Z,8E,10Z,13Z,16Z,19Z)-docosahexaenoate. It catalyses the reaction (4Z,7Z,10Z,13Z,16Z,19Z)-docosahexaenoate + O2 = (17S)-hydroperoxy-(4Z,7Z,10Z,13Z,15E,19Z)-docosahexaenoate. The protein operates within lipid metabolism; leukotriene A4 biosynthesis. Undergoes a sequential loss of the oxygenase and pseudoperoxidase activities which is dependent on the structural characteristics of the substrate for the reaction, on oxygen concentration and on exposure to phospholipids and calcium. 15-HETE and other 15-mono-hydroxyeicosanoids exhibit the highest inhibitory potencies in their capability of suppressing 5-lipoxygenation of arachidonic acid, whereas the other HETEs, (5S,15S)-dihydroxy-(6E,8Z,11Z,13E)-eicosatetraenoic acid (5,15-diHETE) as well as octadecanoids, are modest or poor inhibitors. The formation of (5S)-hydroperoxy-(15S)-hydroxy-(6E,8Z,11Z,13E)-eicosatetraenoate is strongly stimulated by either hydroperoxypolyenoic fatty acids or arachidonic acid. Arachidonate 5-lipoxygenase and leukotriene A4 synthase activities are allosterically increased by ATP. Its function is as follows. Catalyzes the oxygenation of arachidonate ((5Z,8Z,11Z,14Z)-eicosatetraenoate) to 5-hydroperoxyeicosatetraenoate (5-HPETE) followed by the dehydration to 5,6- epoxyeicosatetraenoate (Leukotriene A4/LTA4), the first two steps in the biosynthesis of leukotrienes, which are potent mediators of inflammation. Also catalyzes the oxygenation of arachidonate into 8-hydroperoxyicosatetraenoate (8-HPETE) and 12-hydroperoxyicosatetraenoate (12-HPETE). Displays lipoxin synthase activity being able to convert (15S)-HETE into a conjugate tetraene. Although arachidonate is the preferred substrate, this enzyme can also metabolize oxidized fatty acids derived from arachidonate such as (15S)-HETE, eicosapentaenoate (EPA) such as (18R)- and (18S)-HEPE or docosahexaenoate (DHA) which lead to the formation of specialized pro-resolving mediators (SPM) lipoxin and resolvins E and D respectively, therefore it participates in anti-inflammatory responses. Oxidation of DHA directly inhibits endothelial cell proliferation and sprouting angiogenesis via peroxisome proliferator-activated receptor gamma (PPARgamma). It does not catalyze the oxygenation of linoleic acid and does not convert (5S)-HETE to lipoxin isomers. In addition to inflammatory processes, it participates in dendritic cell migration, wound healing through an antioxidant mechanism based on heme oxygenase-1 (HO-1) regulation expression, monocyte adhesion to the endothelium via ITGAM expression on monocytes. Moreover, it helps establish an adaptive humoral immunity by regulating primary resting B cells and follicular helper T cells and participates in the CD40-induced production of reactive oxygen species (ROS) after CD40 ligation in B cells through interaction with PIK3R1 that bridges ALOX5 with CD40. May also play a role in glucose homeostasis, regulation of insulin secretion and palmitic acid-induced insulin resistance via AMPK. Can regulate bone mineralization and fat cell differentiation increases in induced pluripotent stem cells. The chain is Polyunsaturated fatty acid 5-lipoxygenase from Homo sapiens (Human).